Here is a 693-residue protein sequence, read N- to C-terminus: Protein-glutamine gamma-glutamyltransferase E (693 aa).

At A2 the chain carries N-acetylalanine. A Phosphotyrosine modification is found at Y111. T112 bears the Phosphothreonine mark. Ca(2+) is bound by residues A222, N225, N227, D228, and N230. C273 is a catalytic residue. Residues D302, D304, N306, S308, and D325 each contribute to the Ca(2+) site. Residues H331 and D354 contribute to the active site. Residues N394, S416, E444, and E449 each contribute to the Ca(2+) site.

The protein belongs to the transglutaminase superfamily. Transglutaminase family. In terms of assembly, consists of two polypeptide chains, which are synthesized as a precursor form of a single polypeptide. The cofactor is Ca(2+). Activated by proteolytic processing. In vitro activation is commonly achieved by cleavage with dispase, a neutral bacterial protease. Dispase cleavage site was proposed to lie between Ser-470 and Ser-471 or between Pro-465 and Phe-466. Physiological activation may be catalyzed by CTSL and, to a lesser extent, by CTSS, but not by CTSB, CTSD nor CTSV.

It is found in the cytoplasm. It catalyses the reaction L-glutaminyl-[protein] + L-lysyl-[protein] = [protein]-L-lysyl-N(6)-5-L-glutamyl-[protein] + NH4(+). Catalyzes the calcium-dependent formation of isopeptide cross-links between glutamine and lysine residues in various proteins, as well as the conjugation of polyamines to proteins. Involved in the formation of the cornified envelope (CE), a specialized component consisting of covalent cross-links of proteins beneath the plasma membrane of terminally differentiated keratinocytes. Catalyzes small proline-rich proteins (SPRR1 and SPRR2) and LOR cross-linking to form small interchain oligomers, which are further cross-linked by TGM1 onto the growing CE scaffold. In hair follicles, involved in cross-linking structural proteins to hardening the inner root sheath. The polypeptide is Protein-glutamine gamma-glutamyltransferase E (TGM3) (Homo sapiens (Human)).